A 291-amino-acid polypeptide reads, in one-letter code: 4-hydroxy-tetrahydrodipicolinate synthase (291 aa).

Pyruvate is bound at residue Thr-44. Tyr-132 functions as the Proton donor/acceptor in the catalytic mechanism. The active-site Schiff-base intermediate with substrate is the Lys-160. Ile-202 contacts pyruvate.

The protein belongs to the DapA family. In terms of assembly, homotetramer; dimer of dimers.

It localises to the cytoplasm. The enzyme catalyses L-aspartate 4-semialdehyde + pyruvate = (2S,4S)-4-hydroxy-2,3,4,5-tetrahydrodipicolinate + H2O + H(+). The protein operates within amino-acid biosynthesis; L-lysine biosynthesis via DAP pathway; (S)-tetrahydrodipicolinate from L-aspartate: step 3/4. Catalyzes the condensation of (S)-aspartate-beta-semialdehyde [(S)-ASA] and pyruvate to 4-hydroxy-tetrahydrodipicolinate (HTPA). The sequence is that of 4-hydroxy-tetrahydrodipicolinate synthase from Sphingopyxis alaskensis (strain DSM 13593 / LMG 18877 / RB2256) (Sphingomonas alaskensis).